We begin with the raw amino-acid sequence, 30 residues long: Varv peptide B (30 aa).

The segment at residues 1-30 is a cross-link (cyclopeptide (Gly-Asn)); it reads GLPVCGETCFGGTCNTPGCSCDPWPMCSRN. 3 disulfides stabilise this stretch: Cys5–Cys19, Cys9–Cys21, and Cys14–Cys27.

Post-translationally, this is a cyclic peptide.

Its function is as follows. Probably participates in a plant defense mechanism. In Viola arvensis (European field pansy), this protein is Varv peptide B.